The primary structure comprises 454 residues: Replicative DNA helicase DnaB (454 aa).

Residues 1–149 form an N-terminal domain (NTD) region; it reads MSELFSERIP…LDEADRKIME (149 aa). Residues 163-176 are linker helix; sequence KDILVQTYDNIEML. Residues 179–445 enclose the SF4 helicase domain; that stretch reads RDGEITGIPT…NKFVNLERRF (267 aa). A C-terminal domain (CTD) region spans residues 183–454; the sequence is ITGIPTGFTE…FDEAQIPPGA (272 aa). ATP contacts are provided by Ser-213, Gly-215, Lys-216, Thr-217, and Ala-218. The Nucleophile role is filled by Glu-241. Arg-250 and Gln-362 together coordinate ATP. Positions 381, 382, and 384 each coordinate ssDNA. ATP-binding residues include Lys-418, Gln-419, and Arg-420.

Belongs to the helicase family. DnaB subfamily. Homohexamer. Interacts with DnaG primase, as DnaB(6):DnaG(3). Interacts with the N-terminus of DnaI (shown with DnaI of B.subtilis), forms a helicase DnaB(6):DnaI(6) complex. The DnaB-DnaI complex is disrupted by DnaD (DnaD and DnaI from B.subtilis). A stable complex DnaI(6):DnaB(6):DnaG(3) fragment can be isolated; DnaI and DnaG do not contact each other (DnaI in this complex is derived from B.subtilis). Forms a complex with DNA clamp loader protein tau (shown with B.subtilis HolA) tau(3):DnaB(6); a single ATP hydrolysis even is sufficient for complex formation.

It carries out the reaction Couples ATP hydrolysis with the unwinding of duplex DNA at the replication fork by translocating in the 5'-3' direction. This creates two antiparallel DNA single strands (ssDNA). The leading ssDNA polymer is the template for DNA polymerase III holoenzyme which synthesizes a continuous strand.. The catalysed reaction is ATP + H2O = ADP + phosphate + H(+). Its function is as follows. The main replicative DNA helicase, it participates in initiation and elongation during chromosome replication. Travels ahead of the DNA replisome, separating double-stranded (ds)DNA into templates for DNA synthesis. Binding of single-stranded (ss)DNA to the hexamer suggests a 2-nucleotide step size for the helicase and a hand-over-hand mechanism of DNA unwinding. Has ssDNA-stimulated ATPase activity. DnaG primase stimulates the helicase activity (the helicase direction was not determine but is probably 5'-3'). Loaded onto DNA by helicase loader DnaI (shown with DnaI of B.subtilis); ATP-binding enhances loading and subsequent ATP hydrolysis dissociates the complex, leaving helicase on the DNA. Binds ssDNA and less well dsDNA, in the presence of ADPNP (probably 5'-adenylyl beta, gamma-imidodiphosphate, but not ATP) binding to both DNAs is improved. This is Replicative DNA helicase DnaB from Geobacillus stearothermophilus (Bacillus stearothermophilus).